Here is a 311-residue protein sequence, read N- to C-terminus: GTPase Era (311 aa).

One can recognise an Era-type G domain in the interval 18–185; sequence RSGFVALIGA…AKYLAESVPN (168 aa). The segment at 26-33 is G1; that stretch reads GAPNAGKS. 26-33 lines the GTP pocket; that stretch reads GAPNAGKS. The tract at residues 52–56 is G2; the sequence is QTTRA. A G3 region spans residues 73–76; the sequence is DTPG. GTP contacts are provided by residues 73–77 and 135–138; these read DTPGI and NKVD. Residues 135–138 are G4; sequence NKVD. A G5 region spans residues 164 to 166; it reads ISA. Residues 216-293 form the KH type-2 domain; it reads LHEELPYAST…HLFLFVKVRE (78 aa).

It belongs to the TRAFAC class TrmE-Era-EngA-EngB-Septin-like GTPase superfamily. Era GTPase family. Monomer.

Its subcellular location is the cytoplasm. The protein resides in the cell inner membrane. Functionally, an essential GTPase that binds both GDP and GTP, with rapid nucleotide exchange. Plays a role in 16S rRNA processing and 30S ribosomal subunit biogenesis and possibly also in cell cycle regulation and energy metabolism. The chain is GTPase Era from Brucella suis biovar 1 (strain 1330).